The primary structure comprises 377 residues: Alanine racemase (377 aa).

Residue Lys39 is the Proton acceptor; specific for D-alanine of the active site. Position 39 is an N6-(pyridoxal phosphate)lysine (Lys39). Arg137 contributes to the substrate binding site. Tyr266 functions as the Proton acceptor; specific for L-alanine in the catalytic mechanism. Residue Met314 participates in substrate binding.

It belongs to the alanine racemase family. Pyridoxal 5'-phosphate is required as a cofactor.

It catalyses the reaction L-alanine = D-alanine. The protein operates within amino-acid biosynthesis; D-alanine biosynthesis; D-alanine from L-alanine: step 1/1. Functionally, catalyzes the interconversion of L-alanine and D-alanine. May also act on other amino acids. The chain is Alanine racemase (alr) from Symbiobacterium thermophilum (strain DSM 24528 / JCM 14929 / IAM 14863 / T).